The primary structure comprises 488 residues: 3-octaprenyl-4-hydroxybenzoate carboxy-lyase (488 aa).

Position 172 (Asn172) interacts with Mn(2+). Prenylated FMN is bound by residues 175 to 177 (IYR), 189 to 191 (RWL), and 194 to 195 (RG). Residue Glu238 coordinates Mn(2+). Asp287 functions as the Proton donor in the catalytic mechanism.

Belongs to the UbiD family. As to quaternary structure, homohexamer. Requires prenylated FMN as cofactor. The cofactor is Mn(2+).

The protein resides in the cell membrane. The enzyme catalyses a 4-hydroxy-3-(all-trans-polyprenyl)benzoate + H(+) = a 2-(all-trans-polyprenyl)phenol + CO2. The protein operates within cofactor biosynthesis; ubiquinone biosynthesis. In terms of biological role, catalyzes the decarboxylation of 3-octaprenyl-4-hydroxy benzoate to 2-octaprenylphenol, an intermediate step in ubiquinone biosynthesis. In Stutzerimonas stutzeri (strain A1501) (Pseudomonas stutzeri), this protein is 3-octaprenyl-4-hydroxybenzoate carboxy-lyase.